Reading from the N-terminus, the 117-residue chain is Large ribosomal subunit protein bL20c (117 aa).

Belongs to the bacterial ribosomal protein bL20 family.

The protein localises to the plastid. Its subcellular location is the chloroplast. Binds directly to 23S ribosomal RNA and is necessary for the in vitro assembly process of the 50S ribosomal subunit. It is not involved in the protein synthesizing functions of that subunit. This is Large ribosomal subunit protein bL20c from Acorus gramineus (Dwarf sweet flag).